The following is a 32-amino-acid chain: MSDIN-like toxin proprotein 1 (32 aa).

A propeptide spanning residues 1–10 is cleaved from the precursor; that stretch reads MSDINATRLP. Residues 11-18 constitute a cross-link (cyclopeptide (Ile-Pro)); sequence IFWFIYFP. Positions 19–32 are excised as a propeptide; that stretch reads CVSDVDSTLTRGER.

The protein belongs to the MSDIN fungal toxin family. Post-translationally, processed by the macrocyclase-peptidase enzyme POPB to yield a toxic cyclic octapeptide. POPB first removes 10 residues from the N-terminus. Conformational trapping of the remaining peptide forces the enzyme to release this intermediate rather than proceed to macrocyclization. The enzyme rebinds the remaining peptide in a different conformation and catalyzes macrocyclization of the N-terminal 8 residues. As to expression, expressed in basidiocarps.

In terms of biological role, probable toxin that belongs to the MSDIN-like toxin family responsible for a large number of food poisoning cases and deaths. This is MSDIN-like toxin proprotein 1 from Amanita exitialis (Guangzhou destroying angel).